We begin with the raw amino-acid sequence, 1013 residues long: RNA-binding protein 44 (1013 aa).

Disordered stretches follow at residues 1–25 (MQAT…FQND) and 56–94 (LATE…IFSQ). Over residues 56–76 (LATEERASDKENSIVDQRDLS) the composition is skewed to basic and acidic residues. Positions 78 to 94 (LSFSENQDSNRGNIFSQ) are enriched in polar residues. Phosphoserine occurs at positions 365, 368, 510, 681, and 688. The 74-residue stretch at 792–865 (FLIHVGGLCP…KSVTVRLVKI (74 aa)) folds into the RRM domain. The interval 905–925 (RAKSRQLESEQDSEFPPLDQG) is disordered.

In terms of assembly, homodimer. Interacts with TEX14. As to expression, highly expressed in testis. Also expressed in other tissues at lower level.

It localises to the cytoplasm. Functionally, component of intercellular bridges during meiosis. Intercellular bridges are evolutionarily conserved structures that connect differentiating germ cells. Not required for fertility. The chain is RNA-binding protein 44 (Rbm44) from Mus musculus (Mouse).